The chain runs to 108 residues: Large ribosomal subunit protein bL21 (108 aa).

This sequence belongs to the bacterial ribosomal protein bL21 family. Part of the 50S ribosomal subunit. Contacts protein L20.

Functionally, this protein binds to 23S rRNA in the presence of protein L20. This is Large ribosomal subunit protein bL21 from Buchnera aphidicola subsp. Acyrthosiphon pisum (strain 5A).